The sequence spans 404 residues: Probable tRNA sulfurtransferase (404 aa).

One can recognise a THUMP domain in the interval 60 to 165; the sequence is HEVAESLKEI…DEAAYISYEN (106 aa). ATP is bound by residues 183-184, 208-209, arginine 265, glycine 287, and glutamine 296; these read ML and HF.

It belongs to the ThiI family.

It localises to the cytoplasm. It catalyses the reaction [ThiI sulfur-carrier protein]-S-sulfanyl-L-cysteine + a uridine in tRNA + 2 reduced [2Fe-2S]-[ferredoxin] + ATP + H(+) = [ThiI sulfur-carrier protein]-L-cysteine + a 4-thiouridine in tRNA + 2 oxidized [2Fe-2S]-[ferredoxin] + AMP + diphosphate. The enzyme catalyses [ThiS sulfur-carrier protein]-C-terminal Gly-Gly-AMP + S-sulfanyl-L-cysteinyl-[cysteine desulfurase] + AH2 = [ThiS sulfur-carrier protein]-C-terminal-Gly-aminoethanethioate + L-cysteinyl-[cysteine desulfurase] + A + AMP + 2 H(+). It functions in the pathway cofactor biosynthesis; thiamine diphosphate biosynthesis. Its function is as follows. Catalyzes the ATP-dependent transfer of a sulfur to tRNA to produce 4-thiouridine in position 8 of tRNAs, which functions as a near-UV photosensor. Also catalyzes the transfer of sulfur to the sulfur carrier protein ThiS, forming ThiS-thiocarboxylate. This is a step in the synthesis of thiazole, in the thiamine biosynthesis pathway. The sulfur is donated as persulfide by IscS. This Streptococcus agalactiae serotype Ia (strain ATCC 27591 / A909 / CDC SS700) protein is Probable tRNA sulfurtransferase.